Consider the following 1241-residue polypeptide: DNA-directed RNA polymerase subunit beta (1241 aa).

The disordered stretch occupies residues 1186 to 1210 (EDEIVPTAEKRSSNQDEEALELVDN). Over residues 1200–1210 (QDEEALELVDN) the composition is skewed to acidic residues.

The protein belongs to the RNA polymerase beta chain family. As to quaternary structure, the RNAP catalytic core consists of 2 alpha, 1 beta, 1 beta' and 1 omega subunit. When a sigma factor is associated with the core the holoenzyme is formed, which can initiate transcription.

The enzyme catalyses RNA(n) + a ribonucleoside 5'-triphosphate = RNA(n+1) + diphosphate. Its function is as follows. DNA-dependent RNA polymerase catalyzes the transcription of DNA into RNA using the four ribonucleoside triphosphates as substrates. The protein is DNA-directed RNA polymerase subunit beta of Clostridium novyi (strain NT).